The primary structure comprises 233 residues: Coenzyme Q-binding protein COQ10 homolog, mitochondrial (233 aa).

Residues 1–34 (MAEKATSLFLRAMEISEKQSFDVMRRNSSCTIRH) constitute a mitochondrion transit peptide.

The protein belongs to the COQ10 family. As to quaternary structure, interacts with coenzyme Q.

It localises to the mitochondrion inner membrane. Its function is as follows. Required for the function of coenzyme Q in the respiratory chain. May serve as a chaperone or may be involved in the transport of Q6 from its site of synthesis to the catalytic sites of the respiratory complexes. In Danio rerio (Zebrafish), this protein is Coenzyme Q-binding protein COQ10 homolog, mitochondrial.